A 148-amino-acid chain; its full sequence is Ribonuclease H (148 aa).

Residues 3-144 (AEETVEIFTD…ADALANRGIE (142 aa)) form the RNase H type-1 domain. Mg(2+)-binding residues include aspartate 12, glutamate 50, aspartate 72, and aspartate 136. The disordered stretch occupies residues 129 to 148 (HPENERADALANRGIEELKG).

This sequence belongs to the RNase H family. As to quaternary structure, monomer. Mg(2+) is required as a cofactor.

It localises to the cytoplasm. It carries out the reaction Endonucleolytic cleavage to 5'-phosphomonoester.. Endonuclease that specifically degrades the RNA of RNA-DNA hybrids. This Dechloromonas aromatica (strain RCB) protein is Ribonuclease H.